A 345-amino-acid chain; its full sequence is MRTQKVFTTIDTHTGGNPTRTLISGLPKLLGETMAEKMLHMKKEYDWIRKLLMNEPRGHDVMSGALLTDPCHPDADIGVIYIETGGYLPMCGHDTIGVCTALIESGLIPVVEPITSLKLDTPAGLVEVDIFVRDGKAKEVSFCNIPAFILKHITVDVENIGTVEADIAYGGNFYAIIDAKSVGLELVPEHASTIIDKAIHIRNIINERFEIIHPEYSFIRGLTHVEFYTDPTHESAHVKNTVVVPPGGIDRSPCGTGTSAKLAVLYANQKIEMNEEFVHESIVGSLFKGCVINTTNVANMEAVVTKITGSAWLMGMHRFFYNEKDPLKEGFLLIPPMEHETEDVK.

The protein belongs to the proline racemase family.

This is an uncharacterized protein from Bacillus anthracis.